The sequence spans 115 residues: MLNYFFKKQLRLSDSTSFQDVFNGSVKKKNTLEISILGRFNLLGHPRLGLSIPRKNIKHAHNRNLIKRLVRETFRLLQYKLLSMDFVVIAKKNILFLNNTRIIDMLNSLWSNYYR.

Belongs to the RnpA family. In terms of assembly, consists of a catalytic RNA component (M1 or rnpB) and a protein subunit.

It carries out the reaction Endonucleolytic cleavage of RNA, removing 5'-extranucleotides from tRNA precursor.. In terms of biological role, RNaseP catalyzes the removal of the 5'-leader sequence from pre-tRNA to produce the mature 5'-terminus. It can also cleave other RNA substrates such as 4.5S RNA. The protein component plays an auxiliary but essential role in vivo by binding to the 5'-leader sequence and broadening the substrate specificity of the ribozyme. The polypeptide is Ribonuclease P protein component (Buchnera aphidicola subsp. Acyrthosiphon pisum (strain APS) (Acyrthosiphon pisum symbiotic bacterium)).